The chain runs to 700 residues: Auxin response factor 18 (700 aa).

The segment at residues 128-230 (FAKTLTQSDA…DLCVGIRRAK (103 aa)) is a DNA-binding region (TF-B3). Disordered stretches follow at residues 234-254 (VGGPEFLPPPPPPPPTPAAGG) and 560-595 (VKKSSSDGNAENTVNKSNSDVSSPRSNQNGTTDNLS). Residues 239–250 (FLPPPPPPPPTP) show a composition bias toward pro residues. Over residues 565–594 (SDGNAENTVNKSNSDVSSPRSNQNGTTDNL) the composition is skewed to polar residues. Positions 614–697 (TGHCKVFMQS…NILTDTSGDN (84 aa)) constitute a PB1 domain.

It belongs to the ARF family. As to quaternary structure, homodimers and heterodimers. Expressed in roots, culms, leaves and young panicles.

The protein resides in the nucleus. Functionally, auxin response factors (ARFs) are transcriptional factors that bind specifically to the DNA sequence 5'-TGTCTC-3' found in the auxin-responsive promoter elements (AuxREs). This is Auxin response factor 18 (ARF18) from Oryza sativa subsp. japonica (Rice).